Consider the following 270-residue polypeptide: Oxidized low-density lipoprotein receptor 1 (270 aa).

A compositionally biased stretch (basic and acidic residues) spans Met-1–Asp-14. Residues Met-1–Ala-22 are disordered. At Met-1–Pro-33 the chain is on the cytoplasmic side. A helical; Signal-anchor for type II membrane protein membrane pass occupies residues Ala-34–Leu-56. A lipid anchor (S-palmitoyl cysteine) is attached at Cys-42. A neck region spans residues Ser-57–Trp-146. At Ser-57–Gln-270 the chain is on the extracellular side. N-linked (GlcNAc...) asparagine glycosylation is found at Asn-69 and Asn-135. The stretch at Arg-85–Asn-135 forms a coiled coil. 3 disulfides stabilise this stretch: Cys-140–Cys-151, Cys-168–Cys-260, and Cys-239–Cys-252. The 115-residue stretch at His-147–Gln-261 folds into the C-type lectin domain.

As to quaternary structure, homodimer; disulfide-linked. May form a hexamer composed of 3 homodimers. Interacts with HSP70. Post-translationally, N-glycosylated. Highly expressed in endothelial cells, aortic intima and lung. Expressed at low level in other tissues.

The protein resides in the cell membrane. The protein localises to the membrane raft. It is found in the secreted. Receptor that mediates the recognition, internalization and degradation of oxidatively modified low density lipoprotein (oxLDL) by vascular endothelial cells. OxLDL is a marker of atherosclerosis that induces vascular endothelial cell activation and dysfunction, resulting in pro-inflammatory responses, pro-oxidative conditions and apoptosis. Its association with oxLDL induces the activation of NF-kappa-B through an increased production of intracellular reactive oxygen and a variety of pro-atherogenic cellular responses including a reduction of nitric oxide (NO) release, monocyte adhesion and apoptosis. In addition to binding oxLDL, it acts as a receptor for the HSP70 protein involved in antigen cross-presentation to naive T-cells in dendritic cells, thereby participating in cell-mediated antigen cross-presentation. Also involved in inflammatory process, by acting as a leukocyte-adhesion molecule at the vascular interface in endotoxin-induced inflammation. Also acts as a receptor for advanced glycation end (AGE) products, activated platelets, monocytes, apoptotic cells and both Gram-negative and Gram-positive bacteria. The polypeptide is Oxidized low-density lipoprotein receptor 1 (OLR1) (Bos taurus (Bovine)).